The chain runs to 110 residues: Cyclin-dependent protein kinase inhibitor SMR8 (110 aa).

Interacts with CDKA-1 and D-type cyclins. Expressed in the root vascular tissue.

Probable cyclin-dependent protein kinase (CDK) inhibitor that functions as a repressor of mitosis in the endoreduplication cell cycle. The protein is Cyclin-dependent protein kinase inhibitor SMR8 of Arabidopsis thaliana (Mouse-ear cress).